The chain runs to 58 residues: Metallothionein-1 (58 aa).

The beta stretch occupies residues 1–28 (PGPCCKDKCECAEGGCKTGCKCTSCRCA). Residues Cys-4, Cys-5, Cys-9, Cys-11, Cys-16, Cys-20, Cys-22, Cys-25, Cys-27, Cys-30, Cys-33, Cys-37, Cys-39, Cys-45, Cys-49, Cys-53, Cys-55, and Cys-56 each coordinate a divalent metal cation. Residues 29–58 (PCEKCTSGCKCPSKDECAKTCSKPCSCCXX) are alpha.

The protein belongs to the metallothionein superfamily. Type 3 family.

Functionally, metallothioneins have a high content of cysteine residues that bind various heavy metals. The different forms of lobster metallothioneins may have different biological functions. Class I MTS in marine crustacea are involved in the sequestration of elevated levels of heavy-metal ions. Binds 6 metal ions. Known to bind cadmium. The sequence is that of Metallothionein-1 from Homarus americanus (American lobster).